Consider the following 71-residue polypeptide: IRCFITPDVTSQACPDGHVCYTKMWCDNFCGMRGKRVDLGCAATCPKVKPGVNIKCCSRDNCNPFPTRKRS.

5 disulfides stabilise this stretch: Cys-3–Cys-20, Cys-14–Cys-41, Cys-26–Cys-30, Cys-45–Cys-56, and Cys-57–Cys-62.

It belongs to the three-finger toxin family. Long-chain subfamily. Type II alpha-neurotoxin sub-subfamily. In terms of tissue distribution, expressed by the venom gland.

It localises to the secreted. Binds with high affinity to muscular (alpha-1/CHRNA1) and neuronal (alpha-7/CHRNA7) nicotinic acetylcholine receptor (nAChR) and inhibits acetylcholine from binding to the receptor, thereby impairing neuromuscular and neuronal transmission. The polypeptide is Long neurotoxin 1 (Naja nivea (Cape cobra)).